The following is a 156-amino-acid chain: MPRKGPAPKRPLVVDPVYGSPLVTQLINKVLVDGKKSTAERIVYGALEGARAKNGADPVATLKKAMDNIKPALEVRSRRVGGATYQVPVEVKPGRSTALALRWLVGFSKARREKTMTERLMNEILDASNGLGGAVKRREDTHKMAEANKAFAHYRW.

The protein belongs to the universal ribosomal protein uS7 family. Part of the 30S ribosomal subunit. Contacts proteins S9 and S11.

Its function is as follows. One of the primary rRNA binding proteins, it binds directly to 16S rRNA where it nucleates assembly of the head domain of the 30S subunit. Is located at the subunit interface close to the decoding center, probably blocks exit of the E-site tRNA. In Micrococcus luteus (strain ATCC 4698 / DSM 20030 / JCM 1464 / CCM 169 / CCUG 5858 / IAM 1056 / NBRC 3333 / NCIMB 9278 / NCTC 2665 / VKM Ac-2230) (Micrococcus lysodeikticus), this protein is Small ribosomal subunit protein uS7.